The sequence spans 99 residues: Small ribosomal subunit protein cS23 (99 aa).

Belongs to the chloroplast-specific ribosomal protein cS23 family. As to quaternary structure, part of the 30S ribosomal subunit.

It is found in the plastid. The protein localises to the chloroplast. Functionally, probably a ribosomal protein or a ribosome-associated protein. In Gracilaria tenuistipitata var. liui (Red alga), this protein is Small ribosomal subunit protein cS23.